Reading from the N-terminus, the 254-residue chain is Transcription factor bHLH51 (254 aa).

Residues 62–111 (SLSRSHRLAEKRRRDRINSHLTALRKLVPNSDKLDKAALLATVIEQVKEL) form the bHLH domain.

In terms of assembly, homodimer. As to expression, expressed constitutively in roots, stems, and flowers.

It is found in the nucleus. The chain is Transcription factor bHLH51 (BHLH51) from Arabidopsis thaliana (Mouse-ear cress).